A 402-amino-acid polypeptide reads, in one-letter code: Dynactin subunit 2 (402 aa).

Positions 1–24 are disordered; it reads MADPKYADLPGIARNEPDVYETSD. Alanine 2 is subject to N-acetylalanine. Tyrosine 6 carries the post-translational modification Phosphotyrosine. At serine 83 the chain carries Phosphoserine. Tyrosine 86 is subject to Phosphotyrosine. Positions 100–130 form a coiled coil; that stretch reads QQKYQRLLHEVQELTTEVEKIKTTVKESATE. Residues threonine 134 and threonine 199 each carry the phosphothreonine modification. Residues 185 to 205 form a disordered region; sequence KSSKGSSGGKSTGGTPPDSSL. Positions 215-247 form a coiled coil; it reads EQDKFSQAAKVAELEKRLTELEATVRCDQDAQN. At serine 321 the chain carries Phosphoserine.

This sequence belongs to the dynactin subunit 2 family. As to quaternary structure, subunit of dynactin, a multiprotein complex part of a tripartite complex with dynein and a adapter, such as BICDL1, BICD2 or HOOK3. The dynactin complex is built around ACTR1A/ACTB filament and consists of an actin-related filament composed of a shoulder domain, a pointed end and a barbed end. Its length is defined by its flexible shoulder domain. The soulder is composed of 2 DCTN1 subunits, 4 DCTN2 and 2 DCTN3. The 4 DCNT2 (via N-terminus) bind the ACTR1A filament and act as molecular rulers to determine the length. The pointed end is important for binding dynein-dynactin cargo adapters and consists of 4 subunits: ACTR10, DCNT4, DCTN5 and DCTN6. The barbed end is composed of a CAPZA1:CAPZB heterodimers, which binds ACTR1A/ACTB filament and dynactin and stabilizes dynactin. Interacts with BICD2 and CEP135. Interacts with DYNAP. Interacts with ECPAS. Interacts with MAPRE1.

The protein resides in the cytoplasm. It localises to the cytoskeleton. It is found in the microtubule organizing center. The protein localises to the centrosome. Its subcellular location is the membrane. Functionally, part of the dynactin complex that activates the molecular motor dynein for ultra-processive transport along microtubules. In the dynactin soulder domain, binds the ACTR1A filament and acts as a molecular ruler to determine the length. Modulates cytoplasmic dynein binding to an organelle, and plays a role in prometaphase chromosome alignment and spindle organization during mitosis. Involved in anchoring microtubules to centrosomes. May play a role in synapse formation during brain development. The chain is Dynactin subunit 2 (Dctn2) from Rattus norvegicus (Rat).